The following is an 82-amino-acid chain: Small ribosomal subunit protein uS17 (82 aa).

This sequence belongs to the universal ribosomal protein uS17 family. In terms of assembly, part of the 30S ribosomal subunit.

In terms of biological role, one of the primary rRNA binding proteins, it binds specifically to the 5'-end of 16S ribosomal RNA. In Tolumonas auensis (strain DSM 9187 / NBRC 110442 / TA 4), this protein is Small ribosomal subunit protein uS17.